A 420-amino-acid chain; its full sequence is UDP-N-acetylmuramoylalanine--D-glutamate ligase (420 aa).

An ATP-binding site is contributed by 109-115; sequence GSVGKST.

The protein belongs to the MurCDEF family.

It localises to the cytoplasm. It carries out the reaction UDP-N-acetyl-alpha-D-muramoyl-L-alanine + D-glutamate + ATP = UDP-N-acetyl-alpha-D-muramoyl-L-alanyl-D-glutamate + ADP + phosphate + H(+). It participates in cell wall biogenesis; peptidoglycan biosynthesis. Cell wall formation. Catalyzes the addition of glutamate to the nucleotide precursor UDP-N-acetylmuramoyl-L-alanine (UMA). The sequence is that of UDP-N-acetylmuramoylalanine--D-glutamate ligase from Fervidobacterium nodosum (strain ATCC 35602 / DSM 5306 / Rt17-B1).